We begin with the raw amino-acid sequence, 415 residues long: Homoserine O-succinyltransferase (415 aa).

The span at 1-26 (MTSPALTAASVTPSRNTTSPDTTSHR) shows a compositional bias: polar residues. The interval 1 to 27 (MTSPALTAASVTPSRNTTSPDTTSHRP) is disordered. The 316-residue stretch at 71-386 (NAVLICHALN…HGHDAFLLED (316 aa)) folds into the AB hydrolase-1 domain. The active-site Nucleophile is Ser177. Arg247 lines the substrate pocket. Active-site residues include Asp346 and His379. Asp380 is a substrate binding site.

The protein belongs to the AB hydrolase superfamily. MetX family. As to quaternary structure, homodimer.

It is found in the cytoplasm. It catalyses the reaction L-homoserine + succinyl-CoA = O-succinyl-L-homoserine + CoA. It participates in amino-acid biosynthesis; L-methionine biosynthesis via de novo pathway; O-succinyl-L-homoserine from L-homoserine: step 1/1. In terms of biological role, transfers a succinyl group from succinyl-CoA to L-homoserine, forming succinyl-L-homoserine. The polypeptide is Homoserine O-succinyltransferase (Bordetella avium (strain 197N)).